We begin with the raw amino-acid sequence, 465 residues long: Argininosuccinate lyase (465 aa).

The protein belongs to the lyase 1 family. Argininosuccinate lyase subfamily.

Its subcellular location is the cytoplasm. It catalyses the reaction 2-(N(omega)-L-arginino)succinate = fumarate + L-arginine. The protein operates within amino-acid biosynthesis; L-arginine biosynthesis; L-arginine from L-ornithine and carbamoyl phosphate: step 3/3. The protein is Argininosuccinate lyase of Rhodopseudomonas palustris (strain BisB5).